A 487-amino-acid chain; its full sequence is Glutamyl-tRNA(Gln) amidotransferase subunit A (487 aa).

Catalysis depends on charge relay system residues lysine 78 and serine 153. Serine 177 (acyl-ester intermediate) is an active-site residue.

This sequence belongs to the amidase family. GatA subfamily. Heterotrimer of A, B and C subunits.

It catalyses the reaction L-glutamyl-tRNA(Gln) + L-glutamine + ATP + H2O = L-glutaminyl-tRNA(Gln) + L-glutamate + ADP + phosphate + H(+). Functionally, allows the formation of correctly charged Gln-tRNA(Gln) through the transamidation of misacylated Glu-tRNA(Gln) in organisms which lack glutaminyl-tRNA synthetase. The reaction takes place in the presence of glutamine and ATP through an activated gamma-phospho-Glu-tRNA(Gln). The protein is Glutamyl-tRNA(Gln) amidotransferase subunit A of Oenococcus oeni (strain ATCC BAA-331 / PSU-1).